Reading from the N-terminus, the 433-residue chain is Enolase (433 aa).

Position 163 (glutamine 163) interacts with (2R)-2-phosphoglycerate. The active-site Proton donor is the glutamate 205. Mg(2+) is bound by residues aspartate 242, glutamate 291, and aspartate 318. (2R)-2-phosphoglycerate-binding residues include lysine 343, arginine 372, serine 373, and lysine 394. Lysine 343 (proton acceptor) is an active-site residue.

This sequence belongs to the enolase family. Requires Mg(2+) as cofactor.

It localises to the cytoplasm. The protein localises to the secreted. Its subcellular location is the cell surface. The enzyme catalyses (2R)-2-phosphoglycerate = phosphoenolpyruvate + H2O. The protein operates within carbohydrate degradation; glycolysis; pyruvate from D-glyceraldehyde 3-phosphate: step 4/5. In terms of biological role, catalyzes the reversible conversion of 2-phosphoglycerate (2-PG) into phosphoenolpyruvate (PEP). It is essential for the degradation of carbohydrates via glycolysis. This Methylibium petroleiphilum (strain ATCC BAA-1232 / LMG 22953 / PM1) protein is Enolase.